A 264-amino-acid polypeptide reads, in one-letter code: S-adenosylmethionine decarboxylase proenzyme (264 aa).

Ser112 (schiff-base intermediate with substrate; via pyruvic acid) is an active-site residue. Residue Ser112 is modified to Pyruvic acid (Ser); by autocatalysis. The active-site Proton acceptor; for processing activity is His117. Cys140 functions as the Proton donor; for catalytic activity in the catalytic mechanism.

It belongs to the prokaryotic AdoMetDC family. Type 2 subfamily. In terms of assembly, heterooctamer of four alpha and four beta chains arranged as a tetramer of alpha/beta heterodimers. The cofactor is pyruvate. In terms of processing, is synthesized initially as an inactive proenzyme. Formation of the active enzyme involves a self-maturation process in which the active site pyruvoyl group is generated from an internal serine residue via an autocatalytic post-translational modification. Two non-identical subunits are generated from the proenzyme in this reaction, and the pyruvate is formed at the N-terminus of the alpha chain, which is derived from the carboxyl end of the proenzyme. The post-translation cleavage follows an unusual pathway, termed non-hydrolytic serinolysis, in which the side chain hydroxyl group of the serine supplies its oxygen atom to form the C-terminus of the beta chain, while the remainder of the serine residue undergoes an oxidative deamination to produce ammonia and the pyruvoyl group blocking the N-terminus of the alpha chain.

It carries out the reaction S-adenosyl-L-methionine + H(+) = S-adenosyl 3-(methylsulfanyl)propylamine + CO2. Its pathway is amine and polyamine biosynthesis; S-adenosylmethioninamine biosynthesis; S-adenosylmethioninamine from S-adenosyl-L-methionine: step 1/1. Its function is as follows. Catalyzes the decarboxylation of S-adenosylmethionine to S-adenosylmethioninamine (dcAdoMet), the propylamine donor required for the synthesis of the polyamines spermine and spermidine from the diamine putrescine. The protein is S-adenosylmethionine decarboxylase proenzyme of Escherichia coli O127:H6 (strain E2348/69 / EPEC).